A 669-amino-acid chain; its full sequence is Protein adenylyltransferase SelO, mitochondrial (669 aa).

The transit peptide at M1–E115 directs the protein to the mitochondrion. G153, G155, K176, D188, G189, R246, and R253 together coordinate ATP. D338 acts as the Proton acceptor in catalysis. Mg(2+) is bound by residues N339 and D348. D348 contributes to the ATP binding site. The disordered stretch occupies residues A634–S654. T635 carries the post-translational modification Phosphothreonine. The residue at position 653 (S653) is a Phosphoserine. Residue U667 is a non-standard amino acid, selenocysteine.

The protein belongs to the SELO family. It depends on Mg(2+) as a cofactor.

It is found in the mitochondrion. It catalyses the reaction L-tyrosyl-[protein] + ATP = O-(5'-adenylyl)-L-tyrosyl-[protein] + diphosphate. The catalysed reaction is L-threonyl-[protein] + ATP = 3-O-(5'-adenylyl)-L-threonyl-[protein] + diphosphate. The enzyme catalyses L-seryl-[protein] + ATP = 3-O-(5'-adenylyl)-L-seryl-[protein] + diphosphate. Its function is as follows. Catalyzes the transfer of adenosine 5'-monophosphate (AMP) to Ser, Thr and Tyr residues of target proteins (AMPylation). May be a redox-active mitochondrial selenoprotein which interacts with a redox target protein. The chain is Protein adenylyltransferase SelO, mitochondrial from Homo sapiens (Human).